The chain runs to 161 residues: NAD(P)H-quinone oxidoreductase subunit I, chloroplastic (161 aa).

2 4Fe-4S ferredoxin-type domains span residues 55–84 (GRIH…VDWK) and 95–124 (LNYS…MTEE). [4Fe-4S] cluster-binding residues include Cys-64, Cys-67, Cys-70, Cys-74, Cys-104, Cys-107, Cys-110, and Cys-114.

It belongs to the complex I 23 kDa subunit family. NDH is composed of at least 16 different subunits, 5 of which are encoded in the nucleus. [4Fe-4S] cluster is required as a cofactor.

It is found in the plastid. The protein resides in the chloroplast thylakoid membrane. The catalysed reaction is a plastoquinone + NADH + (n+1) H(+)(in) = a plastoquinol + NAD(+) + n H(+)(out). The enzyme catalyses a plastoquinone + NADPH + (n+1) H(+)(in) = a plastoquinol + NADP(+) + n H(+)(out). In terms of biological role, NDH shuttles electrons from NAD(P)H:plastoquinone, via FMN and iron-sulfur (Fe-S) centers, to quinones in the photosynthetic chain and possibly in a chloroplast respiratory chain. The immediate electron acceptor for the enzyme in this species is believed to be plastoquinone. Couples the redox reaction to proton translocation, and thus conserves the redox energy in a proton gradient. In Lotus japonicus (Lotus corniculatus var. japonicus), this protein is NAD(P)H-quinone oxidoreductase subunit I, chloroplastic.